Here is a 525-residue protein sequence, read N- to C-terminus: Vesicular inhibitory amino acid transporter (525 aa).

Residues 1 to 132 (MATLLRSKLT…WNVTNAIQGM (132 aa)) are Cytoplasmic-facing. The helical transmembrane segment at 133–153 (FVLGLPYAILHGGYLGLFLII) threads the bilayer. The Lumenal, vesicle portion of the chain corresponds to 154 to 204 (FAAVVCCYTGKILIACLYEENEDGEVVRVRDSYVAIANACCAPRFPTLGGR). Tyr186 carries the 3'-nitrotyrosine modification. Residues 205-225 (VVNVAQIIELVMTCILYVVVS) traverse the membrane as a helical segment. Over 226–265 (GNLMYNSFPGLPVSQKSWSIIATAVLLPCAFLKNLKAVSK) the chain is Cytoplasmic. A helical membrane pass occupies residues 266–286 (FSLLCTLAHFVINILVIAYCL). At 287-305 (SRARDWAWEKVKFYIDVKK) the chain is on the lumenal, vesicle side. Residues 306-326 (FPISIGIIVFSYTSQIFLPSL) form a helical membrane-spanning segment. The Cytoplasmic portion of the chain corresponds to 327-341 (EGNMQQPSEFHCMMN). A helical transmembrane segment spans residues 342-362 (WTHIAACVLKGLFALVAYLTW). Topologically, residues 363–383 (ADETKEVITDNLPGSIRAVVN) are lumenal, vesicle. The chain crosses the membrane as a helical span at residues 384-404 (LFLVAKALLSYPLPFFAAVEV). Over 405-438 (LEKSLFQEGSRAFFPACYGGDGRLKSWGLTLRCA) the chain is Cytoplasmic. A helical membrane pass occupies residues 439 to 459 (LVVFTLLMAIYVPHFALLMGL). Residues 460-461 (TG) are Lumenal, vesicle-facing. Residues 462–482 (SLTGAGLCFLLPSLFHLRLLW) form a helical membrane-spanning segment. Topologically, residues 483–489 (RKLLWHQ) are cytoplasmic. Residues 490–510 (VFFDVAIFVIGGICSVSGFVH) form a helical membrane-spanning segment. Residues 511–525 (SLEGLIEAYRTNAED) lie on the Lumenal, vesicle side of the membrane.

The protein belongs to the amino acid/polyamine transporter 2 family. As to expression, brain and retina. Localized in horizontal cell tips at both rod and cone terminals.

The protein resides in the cytoplasmic vesicle membrane. It localises to the presynapse. The enzyme catalyses 4-aminobutanoate(out) + n H(+)(in) = 4-aminobutanoate(in) + n H(+)(out). It catalyses the reaction glycine(out) + n H(+)(in) = glycine(in) + n H(+)(out). The catalysed reaction is beta-alanine(out) + n H(+)(in) = beta-alanine(in) + n H(+)(out). Its activity is regulated as follows. Chloride ions activate 4-aminobutanoate/H(+) transport. Its function is as follows. Antiporter that exchanges vesicular protons for cytosolic 4-aminobutanoate or to a lesser extend glycine, thus allowing their secretion from nerve terminals. The transport is equally dependent on the chemical and electrical components of the proton gradient. May also transport beta-alanine. Acidification of GABAergic synaptic vesicles is a prerequisite for 4-aminobutanoate uptake. This is Vesicular inhibitory amino acid transporter from Mus musculus (Mouse).